We begin with the raw amino-acid sequence, 340 residues long: MKTKIFNTFSISVKAKKIISVYSEIELLQSWQKASAKDPVLFLGSGSNTLFLENYQGTIILNRIKGFHVKENNFFWNIHVCSGELWHNIVTICVNKGISGLENLSWIPGYTGAAPIQNIGAYGVEFKQVCSYVDFIFLETGEKVRLSSQECNFGYRKSIFNSSKKFFNYAIVAIGLKLKKKWKACLNYTDLSFLEKEYVSPKKIYNKIFYIRKEKIPNPVYFGNAGSFFKNPLISSKQAKKILKNYPKAPCFKQLNGNVKFSAGWIIEACGLKGYKLGKAAVYHKQASIIINTGSATGYEIAYLAKYIFCIVKKNFSIQLEPEVKFISKIGEIKASKIIS.

In terms of domain architecture, FAD-binding PCMH-type spans 11-181 (ISVKAKKIIS…VAIGLKLKKK (171 aa)). R156 is an active-site residue. The Proton donor role is filled by S227. Residue E323 is part of the active site.

Belongs to the MurB family. The cofactor is FAD.

The protein localises to the cytoplasm. It carries out the reaction UDP-N-acetyl-alpha-D-muramate + NADP(+) = UDP-N-acetyl-3-O-(1-carboxyvinyl)-alpha-D-glucosamine + NADPH + H(+). It participates in cell wall biogenesis; peptidoglycan biosynthesis. In terms of biological role, cell wall formation. The sequence is that of UDP-N-acetylenolpyruvoylglucosamine reductase from Wigglesworthia glossinidia brevipalpis.